Here is a 315-residue protein sequence, read N- to C-terminus: MPRIAYLGPQGTFTESALLQMISGAMVPGGDADDTAVTPVPTDSTPAGLEAVRSGAADYACVPIENSIEGSVLPTLDSLAVGAPLQIFAELTLAVSFSIVVRPDHDGDVGTVAAFPVAAAQVRRWLAEHLPAAQLVPAHSNAAAAADVAGGRADAGISTALAAERYGLRSLAAGVVDEPNARTRFVLVGRPAPPPARTGADRTSVALRLPNTPGALVAAMTELSIRDIDLTRIESRPTRTELGTYVFFLDCVGHLEDDAVAEALKALHRRCEDVRYLGSWPTGTAAGAPPPSSDEATRWLTRLREGLPTPPEGGR.

The Prephenate dehydratase domain occupies 3-190 (RIAYLGPQGT…ARTRFVLVGR (188 aa)). An ACT domain is found at 204-281 (SVALRLPNTP…EDVRYLGSWP (78 aa)).

In terms of assembly, homodimer.

The enzyme catalyses prephenate + H(+) = 3-phenylpyruvate + CO2 + H2O. It participates in amino-acid biosynthesis; L-phenylalanine biosynthesis; phenylpyruvate from prephenate: step 1/1. The polypeptide is Prephenate dehydratase (pheA) (Mycobacterium sp. (strain KMS)).